Here is a 956-residue protein sequence, read N- to C-terminus: Angiomotin-like protein 1 (956 aa).

Positions 197 to 246 (QSQFFRGQQQQQQQQGAVGHGYYMAGGTSQKSRTEGRPTVNRANSGQAHK) are disordered. Residues Ser241 and Ser269 each carry the phosphoserine modification. Residues 259–279 (RSLSERIMQLSLERNGAKQHL) are a coiled coil. 3 disordered regions span residues 274-322 (GAKQ…QMMS), 382-405 (PSTMQQHSPMSSQTSSASGPLHSV), and 411-430 (LPMALGAPQPPPAASPSQQL). Gly residues predominate over residues 282–294 (SGNGKGFKVGGGP). The residue at position 295 (Ser295) is a Phosphoserine. Residues 382 to 398 (PSTMQQHSPMSSQTSSA) are compositionally biased toward polar residues. Coiled-coil stretches lie at residues 438–639 (VERA…WLER) and 665–694 (ALLELVREKEERILALEADMTKWEQKYLEE). Ser720 is subject to Phosphoserine. The stretch at 729–762 (SLEAHIWQEEEEVVQANRRCQDMEYTIKNLHAKI) forms a coiled coil. Residues 773 to 823 (QQRSRKDAGKTDSSSLRPARSVPSIAAATGTHSRQTSLTSSQLAEEKKEEK) are disordered. 3 positions are modified to phosphoserine: Ser793, Ser805, and Ser828. Residues 802–815 (GTHSRQTSLTSSQL) show a composition bias toward polar residues. 2 disordered regions span residues 841-880 (ASAPLLPPPPTSALSSIASTTAASSAHAKTGSKDSSTQTD) and 894-944 (PSRG…LHKP). The segment covering 852 to 866 (SALSSIASTTAASSA) has biased composition (low complexity). Ser900 carries the post-translational modification Phosphoserine. Thr902 carries the phosphothreonine modification. The residue at position 906 (Ser906) is a Phosphoserine. The PDZ-binding signature appears at 953–956 (EVLI).

It belongs to the angiomotin family. Post-translationally, polyubiquitinated by NEDD4, leading to proteasomal degradation.

The protein localises to the cell junction. It localises to the tight junction. In terms of biological role, inhibits the Wnt/beta-catenin signaling pathway, probably by recruiting CTNNB1 to recycling endosomes and hence preventing its translocation to the nucleus. This Homo sapiens (Human) protein is Angiomotin-like protein 1 (AMOTL1).